Reading from the N-terminus, the 151-residue chain is NADPH-dependent 7-cyano-7-deazaguanine reductase (151 aa).

Cysteine 51 (thioimide intermediate) is an active-site residue. Aspartate 58 serves as the catalytic Proton donor. Substrate contacts are provided by residues 73–75 (VES) and 92–93 (HE).

Belongs to the GTP cyclohydrolase I family. QueF type 1 subfamily.

It localises to the cytoplasm. It catalyses the reaction 7-aminomethyl-7-carbaguanine + 2 NADP(+) = 7-cyano-7-deazaguanine + 2 NADPH + 3 H(+). It participates in tRNA modification; tRNA-queuosine biosynthesis. Catalyzes the NADPH-dependent reduction of 7-cyano-7-deazaguanine (preQ0) to 7-aminomethyl-7-deazaguanine (preQ1). In Bacteroides fragilis (strain ATCC 25285 / DSM 2151 / CCUG 4856 / JCM 11019 / LMG 10263 / NCTC 9343 / Onslow / VPI 2553 / EN-2), this protein is NADPH-dependent 7-cyano-7-deazaguanine reductase.